The sequence spans 245 residues: Suppressor of aph-1 (245 aa).

The 49-residue stretch at aspartate 12–glycine 60 folds into the GYF domain. Residues asparagine 126–threonine 166 form a disordered region.

Involved in negative regulation of early and late embryonic Notch signaling. In Caenorhabditis elegans, this protein is Suppressor of aph-1.